The following is a 409-amino-acid chain: Failed axon connections homolog (409 aa).

Residues 68–88 (YLTGGALLAAAAYLLHELLVI) form a helical membrane-spanning segment. Residues 372–409 (DEGAENSFSRTPDTDFTGHSLFDSDVDMDDYTDHEQCK) form a disordered region.

The protein belongs to the FAX family.

It is found in the membrane. May play a role in axonal development. The polypeptide is Failed axon connections homolog (FAXC) (Homo sapiens (Human)).